The sequence spans 90 residues: U-scoloptoxin(15)-Sa3a (90 aa).

Residues 1–18 form the signal peptide; that stretch reads MKMVYLGLFLIITSCVIS.

The protein belongs to the scoloptoxin-15 family. Contains 3 disulfide bonds. In terms of tissue distribution, expressed by the venom gland.

It localises to the secreted. This Scolopendra alternans (Florida Keys giant centipede) protein is U-scoloptoxin(15)-Sa3a.